Here is a 172-residue protein sequence, read N- to C-terminus: Shikimate kinase (172 aa).

14–19 (GAGKST) contacts ATP. A Mg(2+)-binding site is contributed by S18. Substrate contacts are provided by D36, R60, and G82. Position 120 (R120) interacts with ATP. R139 is a binding site for substrate. Q156 provides a ligand contact to ATP.

The protein belongs to the shikimate kinase family. In terms of assembly, monomer. It depends on Mg(2+) as a cofactor.

Its subcellular location is the cytoplasm. It catalyses the reaction shikimate + ATP = 3-phosphoshikimate + ADP + H(+). Its pathway is metabolic intermediate biosynthesis; chorismate biosynthesis; chorismate from D-erythrose 4-phosphate and phosphoenolpyruvate: step 5/7. In terms of biological role, catalyzes the specific phosphorylation of the 3-hydroxyl group of shikimic acid using ATP as a cosubstrate. The sequence is that of Shikimate kinase from Vibrio campbellii (strain ATCC BAA-1116).